A 123-amino-acid chain; its full sequence is Ribosome-binding factor A (123 aa).

The protein belongs to the RbfA family. Monomer. Binds 30S ribosomal subunits, but not 50S ribosomal subunits or 70S ribosomes.

It is found in the cytoplasm. In terms of biological role, one of several proteins that assist in the late maturation steps of the functional core of the 30S ribosomal subunit. Associates with free 30S ribosomal subunits (but not with 30S subunits that are part of 70S ribosomes or polysomes). Required for efficient processing of 16S rRNA. May interact with the 5'-terminal helix region of 16S rRNA. The protein is Ribosome-binding factor A of Acetivibrio thermocellus (strain ATCC 27405 / DSM 1237 / JCM 9322 / NBRC 103400 / NCIMB 10682 / NRRL B-4536 / VPI 7372) (Clostridium thermocellum).